Consider the following 525-residue polypeptide: Vesicular inhibitory amino acid transporter (525 aa).

At 1–132 the chain is on the cytoplasmic side; sequence MATLLRSKLS…WNVTNAIQGM (132 aa). The tract at residues 69–111 is disordered; it reads PCGDEGAEPPVEGDIHYQRGSGAPLPPSGSKDQVGAGGEFGGH. Residues 133 to 153 form a helical membrane-spanning segment; it reads FVLGLPYAILHGGYLGLFLII. The Lumenal, vesicle segment spans residues 154-204; the sequence is FAAVVCCYTGKILIACLYEENEDGEVVRVRDSYVAIANACCAPRFPTLGGR. The residue at position 186 (tyrosine 186) is a 3'-nitrotyrosine. The chain crosses the membrane as a helical span at residues 205–225; sequence VVNVAQIIELVMTCILYVVVS. Over 226–265 the chain is Cytoplasmic; sequence GNLMYNSFPGLPVSQKSWSIIATAVLLPCAFLKNLKAVSK. The chain crosses the membrane as a helical span at residues 266–286; that stretch reads FSLLCTLAHFVINILVIAYCL. The Lumenal, vesicle segment spans residues 287–305; it reads SRARDWAWEKVKFYIDVKK. A helical membrane pass occupies residues 306–326; it reads FPISIGIIVFSYTSQIFLPSL. At 327-341 the chain is on the cytoplasmic side; sequence EGNMQQPSEFHCMMN. A helical membrane pass occupies residues 342–362; the sequence is WTHIAACVLKGLFALVAYLTW. Topologically, residues 363 to 383 are lumenal, vesicle; sequence ADETKEVITDNLPGSIRAVVN. A helical membrane pass occupies residues 384–404; that stretch reads IFLVAKALLSYPLPFFAAVEV. At 405–438 the chain is on the cytoplasmic side; sequence LEKSLFQEGSRAFFPACYGGDGRLKSWGLTLRCA. Residues 439–459 traverse the membrane as a helical segment; it reads LVVFTLLMAIYVPHFALLMGL. At 460-461 the chain is on the lumenal, vesicle side; that stretch reads TG. A helical transmembrane segment spans residues 462–482; that stretch reads SLTGAGLCFLLPSLFHLRLLW. Residues 483-489 are Cytoplasmic-facing; it reads RKLLWHQ. A helical membrane pass occupies residues 490–510; it reads VFFDVAIFVIGGICSVSGFVH. Topologically, residues 511–525 are lumenal, vesicle; it reads SLEGLIEAYRTNAED.

The protein belongs to the amino acid/polyamine transporter 2 family.

Its subcellular location is the cytoplasmic vesicle membrane. The protein resides in the presynapse. It carries out the reaction 4-aminobutanoate(out) + n H(+)(in) = 4-aminobutanoate(in) + n H(+)(out). It catalyses the reaction glycine(out) + n H(+)(in) = glycine(in) + n H(+)(out). The enzyme catalyses beta-alanine(out) + n H(+)(in) = beta-alanine(in) + n H(+)(out). Functionally, antiporter that exchanges vesicular protons for cytosolic 4-aminobutanoate or to a lesser extend glycine, thus allowing their secretion from nerve terminals. The transport is equally dependent on the chemical and electrical components of the proton gradient. May also transport beta-alanine. Acidification of GABAergic synaptic vesicles is a prerequisite for 4-aminobutanoate uptake. The sequence is that of Vesicular inhibitory amino acid transporter from Macaca fascicularis (Crab-eating macaque).